The chain runs to 1119 residues: Putative transcription factor SEF1 (1119 aa).

Disordered stretches follow at residues 1–70 (MGDP…TQSR) and 86–105 (QNGE…SKGK). Over residues 47–70 (LHTQQSYYGNGTDGASESALTQSR) the composition is skewed to polar residues. The segment at residues 118 to 148 (CTHCRQHKIKCNASEKFPAPCSRCERMGLHC) is a DNA-binding region (zn(2)-C6 fungal-type). Disordered regions lie at residues 236 to 290 (QLLQ…PANT), 306 to 335 (SQQI…SSKQ), 894 to 913 (ASSS…TDTN), 926 to 962 (KKSS…AHNT), and 994 to 1018 (SADS…PDTN). Residues 243–260 (TTTTNPTTSSNSKVVTPT) are compositionally biased toward low complexity. Positions 261-288 (GSDHSPASHNGGSLSSGKPQLLNDSVPA) are enriched in polar residues. Positions 306–322 (SQQISSSSPQNSSPTTT) are enriched in low complexity. Polar residues-rich tracts occupy residues 323–335 (GHSP…SSKQ), 902–913 (RLNADNPTTDTN), and 931–942 (SSDTPTNKPKFN). Residues 943–954 (STSSIPTATPTS) show a composition bias toward low complexity.

The protein localises to the nucleus. Functionally, putative transcription factor. Suppresses the lethal phenotype of RPM2 deletion. This is Putative transcription factor SEF1 (SEF1) from Kluyveromyces lactis (strain ATCC 8585 / CBS 2359 / DSM 70799 / NBRC 1267 / NRRL Y-1140 / WM37) (Yeast).